The sequence spans 160 residues: Globin CTT-II beta (160 aa).

A signal peptide spans 1–15 (MKFLVLALCIAAAVA). One can recognise a Globin domain in the interval 17 to 160 (PLSADEASLV…NVFNMMFSYL (144 aa)). Heme b contacts are provided by His75 and His110.

This sequence belongs to the globin family. As to quaternary structure, homodimer.

This Chironomus thummi thummi (Midge) protein is Globin CTT-II beta.